A 391-amino-acid polypeptide reads, in one-letter code: Alkanesulfonate monooxygenase (391 aa).

It belongs to the SsuD family.

The catalysed reaction is an alkanesulfonate + FMNH2 + O2 = an aldehyde + FMN + sulfite + H2O + 2 H(+). In terms of biological role, catalyzes the desulfonation of aliphatic sulfonates. The protein is Alkanesulfonate monooxygenase of Rhodopseudomonas palustris (strain ATCC BAA-98 / CGA009).